The primary structure comprises 502 residues: ATP synthase subunit alpha (502 aa).

The disordered stretch occupies residues 117–139 (GMGPVLTSKTRPIESPAPGVMDR). Position 169–176 (169–176 (GDRQTGKT)) interacts with ATP.

Belongs to the ATPase alpha/beta chains family. In terms of assembly, F-type ATPases have 2 components, CF(1) - the catalytic core - and CF(0) - the membrane proton channel. CF(1) has five subunits: alpha(3), beta(3), gamma(1), delta(1), epsilon(1). CF(0) has three main subunits: a(1), b(2) and c(9-12). The alpha and beta chains form an alternating ring which encloses part of the gamma chain. CF(1) is attached to CF(0) by a central stalk formed by the gamma and epsilon chains, while a peripheral stalk is formed by the delta and b chains.

The protein resides in the cell membrane. The catalysed reaction is ATP + H2O + 4 H(+)(in) = ADP + phosphate + 5 H(+)(out). Functionally, produces ATP from ADP in the presence of a proton gradient across the membrane. The alpha chain is a regulatory subunit. In Bacillus licheniformis (strain ATCC 14580 / DSM 13 / JCM 2505 / CCUG 7422 / NBRC 12200 / NCIMB 9375 / NCTC 10341 / NRRL NRS-1264 / Gibson 46), this protein is ATP synthase subunit alpha.